Consider the following 568-residue polypeptide: Mannitol 2-dehydrogenase (568 aa).

109-120 (IVHVGVGGFHRA) is an NAD(+) binding site.

It belongs to the mannitol dehydrogenase family. As to quaternary structure, monomer.

The catalysed reaction is D-mannitol + NAD(+) = D-fructose + NADH + H(+). Functionally, catalyzes the NAD(H)-dependent interconversion of D-fructose and D-mannitol in the mannitol metabolic pathway. The polypeptide is Mannitol 2-dehydrogenase (Phaeosphaeria nodorum (strain SN15 / ATCC MYA-4574 / FGSC 10173) (Glume blotch fungus)).